A 257-amino-acid chain; its full sequence is Phosphonates import ATP-binding protein PhnC (257 aa).

In terms of domain architecture, ABC transporter spans 4–248; sequence IEFKNVSKVY…VFSEIYGRTI (245 aa). Residue 37-44 coordinates ATP; that stretch reads GLSGAGKS.

It belongs to the ABC transporter superfamily. Phosphonates importer (TC 3.A.1.9.1) family. In terms of assembly, the complex is composed of two ATP-binding proteins (PhnC), two transmembrane proteins (PhnE) and a solute-binding protein (PhnD).

It is found in the cell membrane. It catalyses the reaction phosphonate(out) + ATP + H2O = phosphonate(in) + ADP + phosphate + H(+). Part of the ABC transporter complex PhnCDE involved in phosphonates import. Responsible for energy coupling to the transport system. The sequence is that of Phosphonates import ATP-binding protein PhnC from Staphylococcus aureus (strain COL).